The primary structure comprises 269 residues: Thymidylate synthase (269 aa).

Residue R26 participates in dUMP binding. H56 is a (6R)-5,10-methylene-5,6,7,8-tetrahydrofolate binding site. 131–132 (RR) provides a ligand contact to dUMP. Residue C151 is the Nucleophile of the active site. Residues 171 to 174 (RSAD), N182, and 212 to 214 (HIY) contribute to the dUMP site. Residue D174 coordinates (6R)-5,10-methylene-5,6,7,8-tetrahydrofolate. Position 268 (A268) interacts with (6R)-5,10-methylene-5,6,7,8-tetrahydrofolate.

Belongs to the thymidylate synthase family. Bacterial-type ThyA subfamily. As to quaternary structure, homodimer.

The protein localises to the cytoplasm. It catalyses the reaction dUMP + (6R)-5,10-methylene-5,6,7,8-tetrahydrofolate = 7,8-dihydrofolate + dTMP. It participates in pyrimidine metabolism; dTTP biosynthesis. In terms of biological role, catalyzes the reductive methylation of 2'-deoxyuridine-5'-monophosphate (dUMP) to 2'-deoxythymidine-5'-monophosphate (dTMP) while utilizing 5,10-methylenetetrahydrofolate (mTHF) as the methyl donor and reductant in the reaction, yielding dihydrofolate (DHF) as a by-product. This enzymatic reaction provides an intracellular de novo source of dTMP, an essential precursor for DNA biosynthesis. In Leifsonia xyli subsp. xyli (strain CTCB07), this protein is Thymidylate synthase.